The following is a 211-amino-acid chain: UPF0637 protein BLi01683/BL05149 (211 aa).

This sequence belongs to the UPF0637 family.

In Bacillus licheniformis (strain ATCC 14580 / DSM 13 / JCM 2505 / CCUG 7422 / NBRC 12200 / NCIMB 9375 / NCTC 10341 / NRRL NRS-1264 / Gibson 46), this protein is UPF0637 protein BLi01683/BL05149.